The primary structure comprises 361 residues: Caveolae-associated protein 4 (361 aa).

Residues 1–21 (MEHNGSASNADKIHQNRLSNV) are disordered. A coiled-coil region spans residues 100-124 (IKDVKARVEKQQTHVKKVEAKQEEI). A phosphoserine mark is found at Ser152, Ser171, and Ser172. Residues 204–248 (ENMQKTRQNFDKKVNRIRTRIVTPERRERLRQSGERLRQSGERLK) adopt a coiled-coil conformation. Residues 230 to 255 (RERLRQSGERLRQSGERLKQSGERFK) are compositionally biased toward basic and acidic residues. Disordered regions lie at residues 230–283 (RERL…AVAE) and 310–346 (PEAL…FKPQ). A Phosphothreonine modification is found at Thr335. Ser354 is modified (phosphoserine).

It belongs to the CAVIN family. In terms of assembly, component of the CAVIN complex composed of CAVIN1, CAVIN2, CAVIN3 and CAVIN4. Interacts with CAVIN1, ADRA1A, ADRA1B, MAPK1 and MAPK3. Interacts with CAVIN2; this augments the transactivation of NPPA.

It localises to the cytoplasm. The protein resides in the myofibril. The protein localises to the sarcomere. It is found in the cytosol. Its subcellular location is the cell membrane. It localises to the sarcolemma. The protein resides in the membrane. The protein localises to the caveola. Modulates the morphology of formed caveolae in cardiomyocytes, but is not required for caveolar formation. Facilitates the recruitment of MAPK1/3 to caveolae within cardiomyocytes and regulates alpha-1 adrenergic receptor-induced hypertrophic responses in cardiomyocytes through MAPK1/3 activation. Contributes to proper membrane localization and stabilization of caveolin-3 (CAV3) in cardiomyocytes. Induces RHOA activation and activates NPPA transcription and myofibrillar organization through the Rho/ROCK signaling pathway. This is Caveolae-associated protein 4 (CAVIN4) from Bos taurus (Bovine).